The chain runs to 412 residues: Proline-rich protein 30 (412 aa).

Polar residues predominate over residues His33–Arg45. 3 disordered regions span residues His33–Ser75, Pro123–Gln174, and Pro318–Val412. Low complexity-rich tracts occupy residues Pro126–Pro142 and Pro334–Ala350. A compositionally biased stretch (polar residues) spans Thr353–Arg372.

This Macaca fascicularis (Crab-eating macaque) protein is Proline-rich protein 30 (PRR30).